A 335-amino-acid chain; its full sequence is Tetraacyldisaccharide 4'-kinase (335 aa).

58-65 (TVGGVGKT) contributes to the ATP binding site.

The protein belongs to the LpxK family.

It catalyses the reaction a lipid A disaccharide + ATP = a lipid IVA + ADP + H(+). It participates in glycolipid biosynthesis; lipid IV(A) biosynthesis; lipid IV(A) from (3R)-3-hydroxytetradecanoyl-[acyl-carrier-protein] and UDP-N-acetyl-alpha-D-glucosamine: step 6/6. In terms of biological role, transfers the gamma-phosphate of ATP to the 4'-position of a tetraacyldisaccharide 1-phosphate intermediate (termed DS-1-P) to form tetraacyldisaccharide 1,4'-bis-phosphate (lipid IVA). This is Tetraacyldisaccharide 4'-kinase from Caulobacter sp. (strain K31).